The following is a 223-amino-acid chain: Exosome complex component RRP46 (223 aa).

Belongs to the RNase PH family. As to quaternary structure, component of the RNA exosome complex. Specifically part of the catalytically inactive RNA exosome core complex (Exo-9) which may associate with the catalytic subunits RRP6 and DIS3 in cytoplasmic- and nuclear-specific RNA exosome complex forms. Exo-9 is formed by a hexameric base ring of RNase PH domain-containing subunits and a cap ring consisting of CSL4, RRP4 and RRP40.

The protein localises to the cytoplasm. It is found in the nucleus. Its subcellular location is the nucleolus. Its function is as follows. Non-catalytic component of the RNA exosome complex which has 3'-&gt;5' exoribonuclease activity and participates in a multitude of cellular RNA processing and degradation events. In the nucleus, the RNA exosome complex is involved in proper maturation of stable RNA species such as rRNA, snRNA and snoRNA, in the elimination of RNA processing by-products and non-coding 'pervasive' transcripts, such as antisense RNA species and cryptic unstable transcripts (CUTs), and of mRNAs with processing defects, thereby limiting or excluding their export to the cytoplasm. In the cytoplasm, the RNA exosome complex is involved in general mRNA turnover and in RNA surveillance pathways, preventing translation of aberrant mRNAs. The catalytic inactive RNA exosome core complex of 9 subunits (Exo-9) is proposed to play a pivotal role in the binding and presentation of RNA for ribonucleolysis, and to serve as a scaffold for the association with catalytic subunits and accessory proteins or complexes. RRP46 is part of the hexameric ring of RNase PH domain-containing subunits proposed to form a central channel which threads RNA substrates for degradation. In Saccharomyces cerevisiae (strain ATCC 204508 / S288c) (Baker's yeast), this protein is Exosome complex component RRP46 (RRP46).